The primary structure comprises 88 residues: Small ribosomal subunit protein bS18B (88 aa).

It belongs to the bacterial ribosomal protein bS18 family. In terms of assembly, part of the 30S ribosomal subunit. Forms a tight heterodimer with protein bS6.

Its function is as follows. Binds as a heterodimer with protein bS6 to the central domain of the 16S rRNA, where it helps stabilize the platform of the 30S subunit. The sequence is that of Small ribosomal subunit protein bS18B from Roseiflexus castenholzii (strain DSM 13941 / HLO8).